The chain runs to 203 residues: Snake venom metalloproteinase adamalysin-2 (203 aa).

Positions 7 to 203 (RYIELVVVAD…YKPQCILNKP (197 aa)) constitute a Peptidase M12B domain. E10 and D94 together coordinate Ca(2+). 2 disulfide bridges follow: C118/C198 and C158/C165. H143 provides a ligand contact to Zn(2+). E144 is a catalytic residue. Positions 147 and 153 each coordinate Zn(2+). C198 and N201 together coordinate Ca(2+).

It belongs to the venom metalloproteinase (M12B) family. P-I subfamily. In terms of assembly, monomer. Zn(2+) serves as cofactor. In terms of tissue distribution, expressed by the venom gland.

It localises to the secreted. It carries out the reaction Cleavage of 1-Phe-|-Val-2, 5-His-|-Leu-6, 14-Ala-|-Leu-15, 15-Leu-|-Tyr-16, and 16-Tyr-|-Leu-17 of insulin B chain.. Its function is as follows. Has no significant hemorrhagic activity, but inactivates serpins by limited proteolysis of their reactive-site loops. The chain is Snake venom metalloproteinase adamalysin-2 from Crotalus adamanteus (Eastern diamondback rattlesnake).